A 519-amino-acid polypeptide reads, in one-letter code: ATP synthase subunit alpha (519 aa).

174-181 contacts ATP; it reads GDRQTGKT.

This sequence belongs to the ATPase alpha/beta chains family. F-type ATPases have 2 components, CF(1) - the catalytic core - and CF(0) - the membrane proton channel. CF(1) has five subunits: alpha(3), beta(3), gamma(1), delta(1), epsilon(1). CF(0) has three main subunits: a(1), b(2) and c(9-12). The alpha and beta chains form an alternating ring which encloses part of the gamma chain. CF(1) is attached to CF(0) by a central stalk formed by the gamma and epsilon chains, while a peripheral stalk is formed by the delta and b chains.

Its subcellular location is the cell inner membrane. The catalysed reaction is ATP + H2O + 4 H(+)(in) = ADP + phosphate + 5 H(+)(out). Its function is as follows. Produces ATP from ADP in the presence of a proton gradient across the membrane. The alpha chain is a regulatory subunit. This is ATP synthase subunit alpha from Acidovorax ebreus (strain TPSY) (Diaphorobacter sp. (strain TPSY)).